We begin with the raw amino-acid sequence, 41 residues long: Large ribosomal subunit protein bL36B (41 aa).

Belongs to the bacterial ribosomal protein bL36 family.

This is Large ribosomal subunit protein bL36B from Vibrio campbellii (strain ATCC BAA-1116).